The sequence spans 85 residues: Small ribosomal subunit protein bS18 (85 aa).

This sequence belongs to the bacterial ribosomal protein bS18 family. In terms of assembly, part of the 30S ribosomal subunit. Forms a tight heterodimer with protein bS6.

Binds as a heterodimer with protein bS6 to the central domain of the 16S rRNA, where it helps stabilize the platform of the 30S subunit. This chain is Small ribosomal subunit protein bS18, found in Hyphomonas neptunium (strain ATCC 15444).